Reading from the N-terminus, the 81-residue chain is Cytotoxin 1d/1e (81 aa).

A signal peptide spans 1–21 (MKTLLLTLVVVTIVCLDLGYT). 4 disulfide bridges follow: cysteine 24–cysteine 42, cysteine 35–cysteine 59, cysteine 63–cysteine 74, and cysteine 75–cysteine 80.

Belongs to the three-finger toxin family. Short-chain subfamily. Type IA cytotoxin sub-subfamily. As to quaternary structure, monomer in solution; Homodimer and oligomer in the presence of negatively charged lipids forming a pore with a size ranging between 20 and 30 Angstroms. In terms of tissue distribution, expressed by the venom gland.

It localises to the secreted. The protein resides in the target cell membrane. Functionally, shows cytolytic activity on many different cells by forming pore in lipid membranes. In vivo, increases heart rate or kills the animal by cardiac arrest. In addition, it binds to heparin with high affinity, interacts with Kv channel-interacting protein 1 (KCNIP1) in a calcium-independent manner, and binds to integrin alpha-V/beta-3 (ITGAV/ITGB3) with moderate affinity. The protein is Cytotoxin 1d/1e of Naja atra (Chinese cobra).